The chain runs to 132 residues: Ubiquinol-cytochrome c reductase complex assembly factor 4 (132 aa).

The N-terminal stretch at 1–15 (MNRVLCAPAAGAVRA) is a signal peptide. Over 16–78 (LRLIGRTSRS…GKGHQRPWWK (63 aa)) the chain is Mitochondrial matrix. Residues 24–73 (RSLHPLPGSRDRAHPAAEEQDDPDRPTEFSSSKANPRRWSVGHSMGKGHQ) are disordered. Residues 32-50 (SRDRAHPAAEEQDDPDRPT) show a composition bias toward basic and acidic residues. The helical transmembrane segment at 79–95 (VLPLSCFLVALIIWCYL) threads the bilayer. Over 96 to 132 (REESEADQWLRQVWGEVPEPSDRSEEPETPAAYRART) the chain is Mitochondrial intermembrane. The tract at residues 110-132 (GEVPEPSDRSEEPETPAAYRART) is disordered.

The protein belongs to the UQCC4 family. In terms of assembly, forms a complex, named COMB/coordinator of mitochondrial CYTB biogenesis, composed of UQCC1, UQCC2, UQCC4, UQCC5 and UQCC6; stabilizes nascent cytochrome b/MT-CYB and promotes its membrane insertion. Forms a complex, named COMA, composed of UQCC1, UQCC2 and UQCC4; activates MT-CYB translation. Forms a complex, named COMC, composed of UQCC1, UQCC2; UQCC3 and UQCC4; mediates MT-CYB hemylation and association with the first nuclear-encoded complex III subunit UQCRQ. Complexes COMA and COMB are bound to the mitochondrion inner membrane by UQCC4.

Its subcellular location is the mitochondrion inner membrane. Its function is as follows. Required for the assembly and stability of the mitochondrial ubiquinol-cytochrome c reductase complex (complex III (CIII) or cytochrome b-c1 complex), a multisubunit transmembrane complex that is part of the mitochondrial electron transport chain (ETC) which drives oxidative phosphorylation. The sequence is that of Ubiquinol-cytochrome c reductase complex assembly factor 4 (UQCC4) from Pongo abelii (Sumatran orangutan).